A 386-amino-acid chain; its full sequence is GTPase Obg (386 aa).

Positions 4 to 162 (SNFVDYVKIY…MTVILELKLL (159 aa)) constitute an Obg domain. The disordered stretch occupies residues 18–45 (KGGRGSTHMRREKYTPNGGPDGGDGGRG). Over residues 36–45 (GPDGGDGGRG) the composition is skewed to gly residues. The OBG-type G domain occupies 163-329 (ADVGLVGFPN…LKDILWTELN (167 aa)). GTP-binding positions include 169–176 (GFPNAGKS), 194–198 (FTTLE), 216–219 (DIPG), 283–286 (TKSD), and 310–312 (SSV). Residues Ser176 and Thr196 each coordinate Mg(2+). The disordered stretch occupies residues 351 to 386 (ELKDMGEDEELDYEYEDDGDEDDLDYEYEEEDWEDK). Acidic residues predominate over residues 356–386 (GEDEELDYEYEDDGDEDDLDYEYEEEDWEDK).

Belongs to the TRAFAC class OBG-HflX-like GTPase superfamily. OBG GTPase family. As to quaternary structure, monomer. Mg(2+) serves as cofactor.

The protein resides in the cytoplasm. An essential GTPase which binds GTP, GDP and possibly (p)ppGpp with moderate affinity, with high nucleotide exchange rates and a fairly low GTP hydrolysis rate. Plays a role in control of the cell cycle, stress response, ribosome biogenesis and in those bacteria that undergo differentiation, in morphogenesis control. The protein is GTPase Obg of Bacteroides fragilis (strain YCH46).